The sequence spans 300 residues: tRNA pseudouridine synthase B (300 aa).

Catalysis depends on aspartate 38, which acts as the Nucleophile.

Belongs to the pseudouridine synthase TruB family. Type 1 subfamily.

The enzyme catalyses uridine(55) in tRNA = pseudouridine(55) in tRNA. In terms of biological role, responsible for synthesis of pseudouridine from uracil-55 in the psi GC loop of transfer RNAs. This chain is tRNA pseudouridine synthase B, found in Anaplasma phagocytophilum (strain HZ).